Here is a 400-residue protein sequence, read N- to C-terminus: Phosphoglycerate kinase (400 aa).

Residues 19–21 (DLN), arginine 38, 61–64 (HLGR), arginine 124, and arginine 161 contribute to the substrate site. Residues lysine 211, glycine 299, glutamate 330, and 356–359 (GGDS) each bind ATP.

The protein belongs to the phosphoglycerate kinase family. In terms of assembly, monomer.

The protein resides in the cytoplasm. It catalyses the reaction (2R)-3-phosphoglycerate + ATP = (2R)-3-phospho-glyceroyl phosphate + ADP. It participates in carbohydrate degradation; glycolysis; pyruvate from D-glyceraldehyde 3-phosphate: step 2/5. The polypeptide is Phosphoglycerate kinase (Parafrankia sp. (strain EAN1pec)).